The primary structure comprises 583 residues: Isocitrate dehydrogenase kinase/phosphatase (583 aa).

ATP-binding positions include 315–321 and Lys336; that span reads APGIRGM. The active site involves Asp371.

It belongs to the AceK family.

Its subcellular location is the cytoplasm. It catalyses the reaction L-seryl-[isocitrate dehydrogenase] + ATP = O-phospho-L-seryl-[isocitrate dehydrogenase] + ADP + H(+). Functionally, bifunctional enzyme which can phosphorylate or dephosphorylate isocitrate dehydrogenase (IDH) on a specific serine residue. This is a regulatory mechanism which enables bacteria to bypass the Krebs cycle via the glyoxylate shunt in response to the source of carbon. When bacteria are grown on glucose, IDH is fully active and unphosphorylated, but when grown on acetate or ethanol, the activity of IDH declines drastically concomitant with its phosphorylation. The chain is Isocitrate dehydrogenase kinase/phosphatase from Salmonella paratyphi C (strain RKS4594).